Here is a 291-residue protein sequence, read N- to C-terminus: ATP synthase gamma chain (291 aa).

Belongs to the ATPase gamma chain family. As to quaternary structure, F-type ATPases have 2 components, CF(1) - the catalytic core - and CF(0) - the membrane proton channel. CF(1) has five subunits: alpha(3), beta(3), gamma(1), delta(1), epsilon(1). CF(0) has three main subunits: a, b and c.

The protein localises to the cell inner membrane. Functionally, produces ATP from ADP in the presence of a proton gradient across the membrane. The gamma chain is believed to be important in regulating ATPase activity and the flow of protons through the CF(0) complex. The chain is ATP synthase gamma chain from Neisseria meningitidis serogroup C / serotype 2a (strain ATCC 700532 / DSM 15464 / FAM18).